A 271-amino-acid chain; its full sequence is Protein FANTASTIC FOUR 1 (271 aa).

The FAF domain occupies 114–168; that stretch reads NSFPPPLNSVNGFNNSRMVKSYKEDGRLVVQAIRVCSPPRCFVSERREGRLRLCL. A disordered region spans residues 174–255; the sequence is NSQDAEEEFE…KRRCNENGCE (82 aa). The segment covering 177–224 has biased composition (acidic residues); that stretch reads DAEEEFEEEDEDDQYDAEEEEEEEEEEEEEEEEEEEEEEEEEEEDEEG. Residues 237–247 are compositionally biased toward basic residues; that stretch reads GNKKVSNRPKR.

The protein belongs to the fantastic four family. Expressed in the shoot apex, stamens, anthers and young siliques. Detected in provascular and vascular tissue.

Its function is as follows. Able to repress WUS when constitutively overexpressed, but have no effect on CLV3. The sequence is that of Protein FANTASTIC FOUR 1 (FAF1) from Arabidopsis thaliana (Mouse-ear cress).